A 404-amino-acid polypeptide reads, in one-letter code: MKLPIYLDYSATTPVDPRVAQKMSECLLVDGNFGNPASRSHVFGWKAEEAVENARRQVAELVNADPREIVWTSGATESDNLAIKGVAHFYASKGKHIITSKIEHKAVLDTTRQLEREGFEVTYLEPGEDGLITPAMVEAALRDDTTLVSVMHVNNEIGTINDIAAIGELTRSRGVLLHVDAAQSTGKVEIDLEKMKVDLMSFSAHKTYGPKGVGALYVRRKPRVRLEAQTHGGGHERGMRSGTLATHQCVGMGEAFRIAKEDMAAENQRITALRDRFYRQLEGMEELYVNGSLTARVPHNLNLSFNYVEGESLIMALKDLAVSSGSACTSASLEPSYVLRALGRNDELAHSSIRFTFGRFTTEEEVDYAAAKVREAVDKLRELSPLWDMFKEGVDLSSVEWAAH.

Residues 75–76 (AT), Asn-155, Gln-183, and 203–205 (SAH) contribute to the pyridoxal 5'-phosphate site. Lys-206 is modified (N6-(pyridoxal phosphate)lysine). Thr-243 is a binding site for pyridoxal 5'-phosphate. Cys-328 acts as the Cysteine persulfide intermediate in catalysis. Position 328 (Cys-328) interacts with [2Fe-2S] cluster.

Belongs to the class-V pyridoxal-phosphate-dependent aminotransferase family. NifS/IscS subfamily. In terms of assembly, homodimer. Forms a heterotetramer with IscU, interacts with other sulfur acceptors. Requires pyridoxal 5'-phosphate as cofactor.

It is found in the cytoplasm. The catalysed reaction is (sulfur carrier)-H + L-cysteine = (sulfur carrier)-SH + L-alanine. It functions in the pathway cofactor biosynthesis; iron-sulfur cluster biosynthesis. In terms of biological role, master enzyme that delivers sulfur to a number of partners involved in Fe-S cluster assembly, tRNA modification or cofactor biosynthesis. Catalyzes the removal of elemental sulfur atoms from cysteine to produce alanine. Functions as a sulfur delivery protein for Fe-S cluster synthesis onto IscU, an Fe-S scaffold assembly protein, as well as other S acceptor proteins. The protein is Cysteine desulfurase IscS of Ectopseudomonas mendocina (strain ymp) (Pseudomonas mendocina).